The sequence spans 1016 residues: Probably inactive leucine-rich repeat receptor-like protein kinase At3g28040 (1016 aa).

The first 26 residues, 1–26 (MGKQRRTMISFTLFLTLTMMSSLING), serve as a signal peptide directing secretion. The Extracellular portion of the chain corresponds to 27-646 (DTDSIQLNDD…FHRRMFLSVS (620 aa)). LRR repeat units lie at residues 102 to 124 (RLKV…SNNN), 125 to 147 (HLQK…LGSI), 149 to 171 (SLQH…LFNN), 174 to 196 (SLRY…LFRC), 198 to 219 (VLNS…VSGI), 224 to 245 (RLRA…GILS), 248 to 270 (NLKE…IGLC), 272 to 295 (HLNR…QKLK), 296 to 318 (SLNH…IGDM), 320 to 342 (GLVH…ISNL), 344 to 366 (SLKD…LESC), 368 to 390 (ELMI…FFDL), 391 to 413 (GLQE…SSRL), 416 to 438 (SLIR…VGLF), 440 to 462 (HMRY…IEFL), 464 to 486 (NLTV…ICES), 488 to 510 (SLQI…IGNC), 512 to 535 (SLKL…SNLQ), 536 to 559 (ELKI…GDLQ), and 560 to 582 (NLLL…DVFQ). Asn-112, Asn-135, and Asn-171 each carry an N-linked (GlcNAc...) asparagine glycan. The N-linked (GlcNAc...) asparagine glycan is linked to Asn-203. N-linked (GlcNAc...) asparagine glycosylation is present at Asn-349. N-linked (GlcNAc...) asparagine glycans are attached at residues Asn-445, Asn-464, Asn-509, and Asn-522. An N-linked (GlcNAc...) asparagine glycan is attached at Asn-565. A helical transmembrane segment spans residues 647 to 667 (VIVAISAAILIFSGVIIITLL). Topologically, residues 668–1016 (NASVRRRLAF…PVPHRIMDSF (349 aa)) are cytoplasmic. In terms of domain architecture, Protein kinase spans 726 to 1013 (LNKASRIGEG…INSPVPHRIM (288 aa)). Residues 732–740 (IGEGVFGTV) and Lys-755 contribute to the ATP site. Phosphotyrosine occurs at positions 841 and 898.

This sequence belongs to the protein kinase superfamily. Ser/Thr protein kinase family.

It localises to the membrane. The chain is Probably inactive leucine-rich repeat receptor-like protein kinase At3g28040 from Arabidopsis thaliana (Mouse-ear cress).